Reading from the N-terminus, the 111-residue chain is MFKATARYIRVQPRKARLAAGLMRNRSVVEAQQQLSFSQMKAGRCLKKVLDSAIANAESNENIKRENLCILEVRVDAGPMFKRMKSKSRGGRAPILKRTSHLTVIVGERGQ.

The protein belongs to the universal ribosomal protein uL22 family. In terms of assembly, part of the 50S ribosomal subunit.

Its function is as follows. This protein binds specifically to 23S rRNA; its binding is stimulated by other ribosomal proteins, e.g. L4, L17, and L20. It is important during the early stages of 50S assembly. It makes multiple contacts with different domains of the 23S rRNA in the assembled 50S subunit and ribosome. In terms of biological role, the globular domain of the protein is located near the polypeptide exit tunnel on the outside of the subunit, while an extended beta-hairpin is found that lines the wall of the exit tunnel in the center of the 70S ribosome. The polypeptide is Large ribosomal subunit protein uL22 (Chlamydia trachomatis serovar L2b (strain UCH-1/proctitis)).